We begin with the raw amino-acid sequence, 310 residues long: Beta-ketoacyl-[acyl-carrier-protein] synthase III 1 (310 aa).

Catalysis depends on residues cysteine 112 and histidine 235. The ACP-binding stretch occupies residues 236 to 240 (QANIR). Asparagine 265 is an active-site residue.

Belongs to the thiolase-like superfamily. FabH family. As to quaternary structure, homodimer.

The protein localises to the cytoplasm. It carries out the reaction malonyl-[ACP] + acetyl-CoA + H(+) = 3-oxobutanoyl-[ACP] + CO2 + CoA. The protein operates within lipid metabolism; fatty acid biosynthesis. In terms of biological role, catalyzes the condensation reaction of fatty acid synthesis by the addition to an acyl acceptor of two carbons from malonyl-ACP. Catalyzes the first condensation reaction which initiates fatty acid synthesis and may therefore play a role in governing the total rate of fatty acid production. Possesses both acetoacetyl-ACP synthase and acetyl transacylase activities. Its substrate specificity determines the biosynthesis of branched-chain and/or straight-chain of fatty acids. This Bacillus cereus (strain ATCC 14579 / DSM 31 / CCUG 7414 / JCM 2152 / NBRC 15305 / NCIMB 9373 / NCTC 2599 / NRRL B-3711) protein is Beta-ketoacyl-[acyl-carrier-protein] synthase III 1.